A 216-amino-acid chain; its full sequence is MAANVKVLVVLALLQLMSLHAVVHGGDNGGVSAVATGKHEPKPKQGGGGGGGDGGCHISGFLHGKAGKCNRAHGSDCCVTGRRYPQFRCSPPVSSARPTPATLTLNSFARGGDGGGRSSCDGRFHPDTAMVVALSSGWLRLDGASRCNRMIRVAAGNGRSALARVVDECDSVNGCDAEHNFEPPCPNDVVDGSPAVWKALGLDEGVGEFKVTWSDV.

The first 25 residues, 1–25 (MAANVKVLVVLALLQLMSLHAVVHG), serve as a signal peptide directing secretion.

The protein belongs to the kiwellin family.

Its subcellular location is the secreted. The polypeptide is Putative ripening-related protein 4 (Oryza sativa subsp. japonica (Rice)).